We begin with the raw amino-acid sequence, 536 residues long: Cytochrome P450 monooxygenase fscF (536 aa).

The chain crosses the membrane as a helical span at residues 9 to 29; that stretch reads VSWLCALFTAIALYCIAVAFY. C464 serves as a coordination point for heme.

This sequence belongs to the cytochrome P450 family. Heme serves as cofactor.

The protein resides in the membrane. It functions in the pathway secondary metabolite biosynthesis. Functionally, cytochrome P450 monooxygenase; part of the fragmented gene cluster that mediates the biosynthesis of fusarochromene, a tryptophan-derived metabolite closely related to a group of mycotoxins including fusarochromanone. Within the pathway, fscF catalyzes the epoxidation of desacetylfusarochromene which opens the way to the production of fusarochromanones. The first step of the pathway is the epimerization of L-tryptophan to D-tryptophan in the presence of the NRPS-like tryptophan epimerase fscC. D-tryptophan is subsequently hydroxylated by the tryptophan 6-hydroxylase fscE to yield 6-hydroxytryptophan. The pyrrole ring undergoes cleavaged by the tryptophan 2,3-dioxygenase fscD and is finally converted to 4-hydroxykyrunenine by the hydrolase fscH. The NRPS-like oxidoreductase fscA reduces the carboxyl group to primary alcohol and the DMATS-type prenyltransferase fscG performs prenylation, followed by the formation of a chromene ring catalyzed by the oxidoreductase fscI, which leads to desacetylfusarochromene. Epoxidation by fscF and rearrangement reactions of chromene double bonds convert compound desacetylfusarochromene to fusarochromanones. Although specific acetyltransferases were not found near the fsc gene cluster, several predicted enzymes containing the N-acetyltransferase superfamily domain are present in the genome of F.equiseti. These predicted enzymes may have the potential to convert desacetylfusarochromene to fusarochromene. The polypeptide is Cytochrome P450 monooxygenase fscF (Fusarium equiseti (Fusarium scirpi)).